A 100-amino-acid polypeptide reads, in one-letter code: Urease subunit gamma (100 aa).

It belongs to the urease gamma subunit family. Heterotrimer of UreA (gamma), UreB (beta) and UreC (alpha) subunits. Three heterotrimers associate to form the active enzyme.

The protein localises to the cytoplasm. It carries out the reaction urea + 2 H2O + H(+) = hydrogencarbonate + 2 NH4(+). It functions in the pathway nitrogen metabolism; urea degradation; CO(2) and NH(3) from urea (urease route): step 1/1. The polypeptide is Urease subunit gamma (Mesorhizobium japonicum (strain LMG 29417 / CECT 9101 / MAFF 303099) (Mesorhizobium loti (strain MAFF 303099))).